The primary structure comprises 367 residues: MNILSLRLKNFRNYKEAEVSLSPNINYIFGENAQGKTNLIEALYVLSLGRSFRTSHLTEAIFFGSSYFFLEMTFEKDGVPHTLSTYVDKHGKKIFCDQSPIKTLSQLIGMIPIVLFSAKDRCLIAGAPSDRRLFLNLLLSQCDPQYKHSLSYYHRALLQRNTLLKTKQTSTLSVWDEQLATLGSYLCLSRYTCCAQLNQLIQTLWNNSLSERLFIKFKSSLIKQCKISQEAVKNELHKQLTASLHRDLELGNTSVGPHREDFTLMINDLPVAQFSSEGQKHSLLAVLKLAESLYIKSLHNVYPLFCMDDIHAGLDNQRISQLLGLAPSLGQTLITSTTLPHQTLSEANRIFSVNQAQISIHSHAIIK.

Residue G30 to T37 participates in ATP binding.

This sequence belongs to the RecF family.

It localises to the cytoplasm. In terms of biological role, the RecF protein is involved in DNA metabolism; it is required for DNA replication and normal SOS inducibility. RecF binds preferentially to single-stranded, linear DNA. It also seems to bind ATP. The chain is DNA replication and repair protein RecF from Chlamydia abortus (strain DSM 27085 / S26/3) (Chlamydophila abortus).